A 239-amino-acid polypeptide reads, in one-letter code: RNA chaperone ProQ (239 aa).

Residues 107 to 177 are disordered; it reads KARVQAQRAE…RKPVAKPVQA (71 aa). Basic and acidic residues predominate over residues 115-137; it reads AEQRAKKREAENVAAGEKNERPT.

This sequence belongs to the ProQ family.

It localises to the cytoplasm. In terms of biological role, RNA chaperone with significant RNA binding, RNA strand exchange and RNA duplexing activities. May regulate ProP activity through an RNA-based, post-transcriptional mechanism. The sequence is that of RNA chaperone ProQ from Photorhabdus laumondii subsp. laumondii (strain DSM 15139 / CIP 105565 / TT01) (Photorhabdus luminescens subsp. laumondii).